Consider the following 62-residue polypeptide: Potassium channel toxin alpha-KTx 22.1 (62 aa).

Positions 1–18 (MQKLFIVFVLFCILRLDA) are cleaved as a signal peptide. Disulfide bonds link Cys28–Cys46, Cys33–Cys59, and Cys37–Cys61.

It belongs to the short scorpion toxin superfamily. Potassium channel inhibitor family. Alpha-KTx 22 subfamily. As to expression, expressed by the venom gland.

Its subcellular location is the secreted. Its function is as follows. May block potassium channels. The polypeptide is Potassium channel toxin alpha-KTx 22.1 (Olivierus martensii (Manchurian scorpion)).